A 130-amino-acid polypeptide reads, in one-letter code: Cytochrome c-type biogenesis protein CcmE (130 aa).

The Cytoplasmic portion of the chain corresponds to Met1–Arg7. The chain crosses the membrane as a helical; Signal-anchor for type II membrane protein span at residues Leu8–Thr28. The Extracellular segment spans residues Leu29–Lys130. Heme is bound by residues His120 and Tyr124.

This sequence belongs to the CcmE/CycJ family.

Its subcellular location is the cell membrane. Functionally, heme chaperone required for the biogenesis of c-type cytochromes. Transiently binds heme delivered by CcmC and transfers the heme to apo-cytochromes in a process facilitated by CcmF and CcmH. This Wolbachia pipientis wMel protein is Cytochrome c-type biogenesis protein CcmE.